A 263-amino-acid polypeptide reads, in one-letter code: Palmitoyltransferase ZDHHC22 (263 aa).

Topologically, residues 1–9 (MLALRLLNV) are cytoplasmic. Residues 10-30 (VAPAYFLCISLVTFVLQLFLF) form a helical membrane-spanning segment. At 31-48 (LPSMREDPTATPLFSPAV) the chain is on the lumenal side. Residues 49-69 (LHGALFLFLSANALGNYVLVI) form a helical membrane-spanning segment. Over 70–125 (QNSPDDLGTCQGTMSQRPQCPPPSTHFCRVCSRVTLRHDHHCFFTGNCIGSRNMRN) the chain is Cytoplasmic. Positions 91–131 (PPSTHFCRVCSRVTLRHDHHCFFTGNCIGSRNMRNFILFCL) constitute a DHHC domain. Catalysis depends on C111, which acts as the S-palmitoyl cysteine intermediate. 2 helical membrane-spanning segments follow: residues 126–146 (FILF…AGVA) and 147–167 (YISA…TLLP). Topologically, residues 168–182 (TSISQFFSGAVLGSD) are cytoplasmic. A helical membrane pass occupies residues 183 to 203 (MFVILMLYLWFAVGLACAGFC). Residues 204–263 (CHQLLLILRGQTRYQVRKGMAVRARPWRKNLQEVFGKRWLLGLLVPMFNVGTESSKQQDK) are Lumenal-facing.

The protein belongs to the DHHC palmitoyltransferase family. Interacts with CNN3.

The protein localises to the endoplasmic reticulum membrane. It localises to the golgi apparatus membrane. The enzyme catalyses L-cysteinyl-[protein] + hexadecanoyl-CoA = S-hexadecanoyl-L-cysteinyl-[protein] + CoA. Its function is as follows. Palmitoyltransferase that could catalyze the addition of palmitate onto various protein substrates and be involved in a variety of cellular processes. Catalyzes the palmitoylation of KCNMA1, regulating localization of KCNMA1 to the plasma membrane. Might also mediate palmitoylation of CNN3. This is Palmitoyltransferase ZDHHC22 from Mus musculus (Mouse).